Here is a 467-residue protein sequence, read N- to C-terminus: Cysteine--tRNA ligase (467 aa).

Residue cysteine 29 participates in Zn(2+) binding. The 'HIGH' region motif lies at 31–41; it reads PTVYNYVHIGN. The Zn(2+) site is built by cysteine 209, histidine 234, and glutamate 238. A 'KMSKS' region motif is present at residues 267–271; the sequence is KMSKS. Lysine 270 lines the ATP pocket.

Belongs to the class-I aminoacyl-tRNA synthetase family. Monomer. It depends on Zn(2+) as a cofactor.

The protein localises to the cytoplasm. The catalysed reaction is tRNA(Cys) + L-cysteine + ATP = L-cysteinyl-tRNA(Cys) + AMP + diphosphate. The sequence is that of Cysteine--tRNA ligase from Xylella fastidiosa (strain Temecula1 / ATCC 700964).